The following is a 271-amino-acid chain: ATP synthase subunit a (271 aa).

Helical transmembrane passes span 40-60 (TINI…LVLF), 100-120 (LIAP…LMDL), 146-166 (DVNV…FYSI), 220-240 (LIFI…LNVP), and 242-262 (AIFH…LTIV).

Belongs to the ATPase A chain family. As to quaternary structure, F-type ATPases have 2 components, CF(1) - the catalytic core - and CF(0) - the membrane proton channel. CF(1) has five subunits: alpha(3), beta(3), gamma(1), delta(1), epsilon(1). CF(0) has three main subunits: a(1), b(2) and c(9-12). The alpha and beta chains form an alternating ring which encloses part of the gamma chain. CF(1) is attached to CF(0) by a central stalk formed by the gamma and epsilon chains, while a peripheral stalk is formed by the delta and b chains.

It localises to the cell inner membrane. In terms of biological role, key component of the proton channel; it plays a direct role in the translocation of protons across the membrane. The sequence is that of ATP synthase subunit a from Escherichia coli O8 (strain IAI1).